The chain runs to 306 residues: Oxygen-dependent coproporphyrinogen-III oxidase (306 aa).

S93 is a binding site for substrate. Positions 97 and 107 each coordinate a divalent metal cation. Catalysis depends on H107, which acts as the Proton donor. 109-111 (NVR) contacts substrate. 2 residues coordinate a divalent metal cation: H146 and H176. The important for dimerization stretch occupies residues 241–276 (YVEYNLVYDRGTLFGLQSGGRTESILMSLPPQVAWG). Substrate is bound at residue 259–261 (GGR).

Belongs to the aerobic coproporphyrinogen-III oxidase family. As to quaternary structure, homodimer. Requires a divalent metal cation as cofactor.

Its subcellular location is the cytoplasm. It carries out the reaction coproporphyrinogen III + O2 + 2 H(+) = protoporphyrinogen IX + 2 CO2 + 2 H2O. The protein operates within porphyrin-containing compound metabolism; protoporphyrin-IX biosynthesis; protoporphyrinogen-IX from coproporphyrinogen-III (O2 route): step 1/1. Its function is as follows. Involved in the heme biosynthesis. Catalyzes the aerobic oxidative decarboxylation of propionate groups of rings A and B of coproporphyrinogen-III to yield the vinyl groups in protoporphyrinogen-IX. This chain is Oxygen-dependent coproporphyrinogen-III oxidase, found in Stutzerimonas stutzeri (strain A1501) (Pseudomonas stutzeri).